Consider the following 172-residue polypeptide: MAIVYNRVKSTNDLELKDRLVAINRVTKVTKGGRTFTFAAIVVVGNEDGVIGWGLGKAGEVPAAIAKGVEAAKKNLIRVPVHNGTIPHEQAASYGGASVFLKPATTGTGVKAGGAMRAVLDSVGVTDVLAKSKGSSNPHNLVKATIQALAEMRSPLMVAQNRGISVEKVFKG.

An S5 DRBM domain is found at 16–79 (LKDRLVAINR…EAAKKNLIRV (64 aa)).

This sequence belongs to the universal ribosomal protein uS5 family. In terms of assembly, part of the 30S ribosomal subunit. Contacts proteins S4 and S8.

Its function is as follows. With S4 and S12 plays an important role in translational accuracy. Located at the back of the 30S subunit body where it stabilizes the conformation of the head with respect to the body. In Porphyromonas gingivalis (strain ATCC BAA-308 / W83), this protein is Small ribosomal subunit protein uS5.